We begin with the raw amino-acid sequence, 99 residues long: Large ribosomal subunit protein bL28 (99 aa).

This sequence belongs to the bacterial ribosomal protein bL28 family.

The chain is Large ribosomal subunit protein bL28 from Rhizobium leguminosarum bv. trifolii (strain WSM2304).